Consider the following 308-residue polypeptide: tRNA dimethylallyltransferase (308 aa).

Residue 9–16 participates in ATP binding; it reads GPTAVGKT. Residue 11–16 participates in substrate binding; that stretch reads TAVGKT. An interaction with substrate tRNA region spans residues 34–37; sequence DSMQ.

It belongs to the IPP transferase family. As to quaternary structure, monomer. The cofactor is Mg(2+).

It carries out the reaction adenosine(37) in tRNA + dimethylallyl diphosphate = N(6)-dimethylallyladenosine(37) in tRNA + diphosphate. Functionally, catalyzes the transfer of a dimethylallyl group onto the adenine at position 37 in tRNAs that read codons beginning with uridine, leading to the formation of N6-(dimethylallyl)adenosine (i(6)A). The polypeptide is tRNA dimethylallyltransferase (Lactobacillus delbrueckii subsp. bulgaricus (strain ATCC 11842 / DSM 20081 / BCRC 10696 / JCM 1002 / NBRC 13953 / NCIMB 11778 / NCTC 12712 / WDCM 00102 / Lb 14)).